The primary structure comprises 1079 residues: Tudor domain-containing protein 7A (1079 aa).

One can recognise an HTH OST-type 1 domain in the interval 3 to 76; the sequence is DVELVKKMLR…TGEVMCFAGV (74 aa). A disordered region spans residues 153–175; sequence LPSSRAPAWQMNRKSPVPEKTSV. HTH OST-type domains follow at residues 205–270 and 366–434; these read DVEL…RLVY and LTTE…ILYT. 2 consecutive Tudor domains span residues 519-576 and 708-765; these read SPKI…FMTL and RPFC…FLKE.

The protein belongs to the TDRD7 family.

Its subcellular location is the cytoplasm. In terms of biological role, component of specific cytoplasmic RNA granules involved in post-transcriptional regulation of specific genes: probably acts by binding to specific mRNAs and regulating their translation. Probably required during spermatogenesis. Required for structural integrity of granules in primordial germ cells (PGCs). This chain is Tudor domain-containing protein 7A (tdrd7a), found in Danio rerio (Zebrafish).